Here is a 520-residue protein sequence, read N- to C-terminus: Putative hydrolase Mb2247c (520 aa).

The first 34 residues, 1-34 (MAAMWRRRPLSSALLSFGLLLGGLPLAAPPLAGA), serve as a signal peptide directing secretion. Residues 104-124 (FGALLVNPGGPGASAVDMVAA) form a helical membrane-spanning segment. In terms of domain architecture, AB hydrolase-1 spans 105-403 (GALLVNPGGP…APTPADPAAW (299 aa)). Ser-232 functions as the Nucleophile in the catalytic mechanism. Asp-461 is an active-site residue. Residue His-488 is the Proton donor of the active site.

It belongs to the peptidase S33 family.

It localises to the cell membrane. The sequence is that of Putative hydrolase Mb2247c from Mycobacterium bovis (strain ATCC BAA-935 / AF2122/97).